The following is a 290-amino-acid chain: 4-hydroxy-3-methylbut-2-enyl diphosphate reductase (290 aa).

C12 is a [4Fe-4S] cluster binding site. (2E)-4-hydroxy-3-methylbut-2-enyl diphosphate is bound by residues H50 and H83. H50 and H83 together coordinate dimethylallyl diphosphate. Residues H50 and H83 each contribute to the isopentenyl diphosphate site. [4Fe-4S] cluster is bound at residue C105. H133 provides a ligand contact to (2E)-4-hydroxy-3-methylbut-2-enyl diphosphate. Residue H133 participates in dimethylallyl diphosphate binding. H133 contacts isopentenyl diphosphate. E135 (proton donor) is an active-site residue. T173 lines the (2E)-4-hydroxy-3-methylbut-2-enyl diphosphate pocket. A [4Fe-4S] cluster-binding site is contributed by C202. (2E)-4-hydroxy-3-methylbut-2-enyl diphosphate is bound by residues S230, N232, and S274. Dimethylallyl diphosphate-binding residues include S230, N232, and S274. 3 residues coordinate isopentenyl diphosphate: S230, N232, and S274.

It belongs to the IspH family. Requires [4Fe-4S] cluster as cofactor.

It catalyses the reaction isopentenyl diphosphate + 2 oxidized [2Fe-2S]-[ferredoxin] + H2O = (2E)-4-hydroxy-3-methylbut-2-enyl diphosphate + 2 reduced [2Fe-2S]-[ferredoxin] + 2 H(+). The catalysed reaction is dimethylallyl diphosphate + 2 oxidized [2Fe-2S]-[ferredoxin] + H2O = (2E)-4-hydroxy-3-methylbut-2-enyl diphosphate + 2 reduced [2Fe-2S]-[ferredoxin] + 2 H(+). It participates in isoprenoid biosynthesis; dimethylallyl diphosphate biosynthesis; dimethylallyl diphosphate from (2E)-4-hydroxy-3-methylbutenyl diphosphate: step 1/1. The protein operates within isoprenoid biosynthesis; isopentenyl diphosphate biosynthesis via DXP pathway; isopentenyl diphosphate from 1-deoxy-D-xylulose 5-phosphate: step 6/6. In terms of biological role, catalyzes the conversion of 1-hydroxy-2-methyl-2-(E)-butenyl 4-diphosphate (HMBPP) into a mixture of isopentenyl diphosphate (IPP) and dimethylallyl diphosphate (DMAPP). Acts in the terminal step of the DOXP/MEP pathway for isoprenoid precursor biosynthesis. The protein is 4-hydroxy-3-methylbut-2-enyl diphosphate reductase of Nitratidesulfovibrio vulgaris (strain DP4) (Desulfovibrio vulgaris).